The primary structure comprises 71 residues: UPF0346 protein SSU05_1322 (71 aa).

It belongs to the UPF0346 family.

The sequence is that of UPF0346 protein SSU05_1322 from Streptococcus suis (strain 05ZYH33).